A 250-amino-acid chain; its full sequence is Adapter protein MecA (250 aa).

Belongs to the MecA family. Homodimer.

Enables the recognition and targeting of unfolded and aggregated proteins to the ClpC protease or to other proteins involved in proteolysis. In Streptococcus sanguinis (strain SK36), this protein is Adapter protein MecA.